The sequence spans 1260 residues: Agglutinin-like protein 1 (1260 aa).

The N-terminal stretch at 1-17 (MLQQFTLLFLYLSIASA) is a signal peptide. Intrachain disulfides connect C73-C150, C96-C112, C205-C298, and C227-C256. ALS repeat units lie at residues 365–396 (TTIT…VDVP), 401–432 (TTVT…VQVP), and 438–469 (VSTT…IREP). A glycan (N-linked (GlcNAc...) asparagine) is linked at N471. The ALS 4 repeat unit spans residues 474–505 (VTTTEYWSQSFATTTTVTAPPGETDTVIIREP). N507 is a glycosylation site (N-linked (GlcNAc...) asparagine). One copy of the ALS 5 repeat lies at 510–541 (VTTTEYWSQSYATTTTVTAPPGGTDTVLIREP). An N-linked (GlcNAc...) asparagine glycan is attached at N543. An ALS 6 repeat occupies 546–577 (VTTTEYWSQSYATTTTVTAPPGGTDTVIIREP). The N-linked (GlcNAc...) asparagine glycan is linked to N579. The ALS 7 repeat unit spans residues 582 to 613 (VTTTEYWSQSYATTTTITAPPGETDTVIIREP). A glycan (N-linked (GlcNAc...) asparagine) is linked at N615. The ALS 8 repeat unit spans residues 618–649 (VTTTEYWSQSYATTTTVTAPPGGTDTVLIREP). N-linked (GlcNAc...) asparagine glycosylation is present at N651. An ALS 9 repeat occupies 654–685 (VTTTEYWSQSYATTTTVTAPPGGTDTVLIREP). A glycan (N-linked (GlcNAc...) asparagine) is linked at N687. Residues 690-721 (VTTTEYWSQSYATTTTVTAPPGGTDTVIIREP) form an ALS 10 repeat. N-linked (GlcNAc...) asparagine glycosylation is present at N723. An ALS 11 repeat occupies 726 to 757 (VTTTEYWSQSYATTTTVTAPPGGTDTVIIREP). An N-linked (GlcNAc...) asparagine glycan is attached at N759. One copy of the ALS 12 repeat lies at 762–791 (VTTTEYWSQSFATTTTVTAPPGGTDTVIIY). N820, N886, N918, and N973 each carry an N-linked (GlcNAc...) asparagine glycan. Polar residues-rich tracts occupy residues 896–918 (PTAS…SSDN) and 964–979 (KVTF…GTHD). 2 disordered regions span residues 896–924 (PTAS…KSGV) and 954–1226 (SIPS…SSSP). Over residues 980-995 (SQSTSTEIEIVTTSST) the composition is skewed to low complexity. Over residues 1002–1062 (VSSNTDLTSE…PTVATSTLAS (61 aa)) the composition is skewed to polar residues. N-linked (GlcNAc...) asparagine glycosylation is found at N1045 and N1068. The span at 1073–1090 (HESASTSLKPSMGENSGL) shows a compositional bias: polar residues. Residues 1091-1110 (TTSTEIEATTTSPTEAPSPA) show a composition bias toward low complexity. The span at 1111 to 1154 (VSSGTDVTTEPTDTREQPTTLSTTSKTNSESVATTQATNENGGK) shows a compositional bias: polar residues. Low complexity-rich tracts occupy residues 1155-1176 (SPST…SANS) and 1197-1226 (SHST…SSSP). G1238 is lipidated: GPI-anchor amidated glycine. The propeptide at 1239–1260 (SGSIIQHSTWLYGLITLLSLFI) is removed in mature form.

This sequence belongs to the ALS family. Post-translationally, the GPI-anchor is attached to the protein in the endoplasmic reticulum and serves to target the protein to the cell surface. There, the glucosamine-inositol phospholipid moiety is cleaved off and the GPI-modified mannoprotein is covalently attached via its lipidless GPI glycan remnant to the 1,6-beta-glucan of the outer cell wall layer.

Its subcellular location is the cell membrane. The protein localises to the secreted. It localises to the cell wall. Functionally, major cell surface adhesion protein which mediates both yeast-to-host tissue adherence and yeast aggregation. Acts as a downstream effector of the EFG1 regulatory pathway. Required for rapamycin-induced aggregation of C.albicans. Binds glycans and mediates adherence to endothelial and epithelial cells, thereby playing an important role in the pathogenesis of C.albicans infections. This chain is Agglutinin-like protein 1 (ALS1), found in Candida albicans (strain SC5314 / ATCC MYA-2876) (Yeast).